Consider the following 437-residue polypeptide: Transcriptional modulator WTM1 (437 aa).

The WD 1 repeat unit spans residues 103 to 144 (YQGETVSKMAYLDKTGETTLLSMSKNGSLAWFKEGIKVPIHI). Thr-187 carries the post-translational modification Phosphothreonine. The residue at position 200 (Ser-200) is a Phosphoserine. WD repeat units lie at residues 221 to 259 (PGTT…KPIW), 264 to 304 (PKNG…AATT), and 326 to 366 (AGGD…SKYN). A disordered region spans residues 368–404 (DDTIAPPQDATEESQTKSLRFLHKGGSRRSPKQIGRR). Thr-370 carries the post-translational modification Phosphothreonine. Residues 387–402 (RFLHKGGSRRSPKQIG) show a composition bias toward basic residues. Thr-406 bears the Phosphothreonine mark.

In terms of assembly, interacts with KAP122.

Its subcellular location is the cytoplasm. The protein localises to the nucleus. In terms of biological role, transcriptional modulator with roles in meiotic regulation and silencing. Acts either as an adapter to facilitate nuclear import by KAP122 of the RNR2-RNR4 heterodimer, also called beta-beta' subunit, which corresponds to the small subunit of the ribonucleotide reductase (RNR); or as an anchor to retain RNR2-RNR4 in the nucleus. The polypeptide is Transcriptional modulator WTM1 (WTM1) (Saccharomyces cerevisiae (strain ATCC 204508 / S288c) (Baker's yeast)).